Here is a 374-residue protein sequence, read N- to C-terminus: Lipopolysaccharide glucosyltransferase WaaG (374 aa).

2 residues coordinate UDP-alpha-D-glucose: Gly-15 and Asp-19. Residues 103–132 (YAEKVAQEKGFLYRLTSRYRHYAAFERATF) form a membrane-interacting region region. Arg-173, Arg-208, Lys-209, Arg-261, Glu-281, Ala-283, Gly-284, Ile-285, Val-286, and Glu-289 together coordinate UDP-alpha-D-glucose.

It belongs to the glycosyltransferase group 1 family. Glycosyltransferase 4 subfamily.

Its subcellular location is the cell inner membrane. It functions in the pathway bacterial outer membrane biogenesis; LPS core biosynthesis. Inhibited by divalent metal ions such as Mg(2+), Mn(2+), Ca(2+), Zn(2+), Co(2+), Ni(2+) and Cu(2+). In terms of biological role, glucosyltransferase involved in the biosynthesis of the core oligosaccharide region of lipopolysaccharide (LPS). Catalyzes the addition of the first outer-core glucose from UDP-glucose to the inner-core heptose II. Cannot use other sugar donors, such as UDP-galactose, UDP-glucuronic acid, UDP-galacuronic acid, GDP-mannose, ADP-glucose and GDP-glucose. In the absence of a lipid acceptor, can slowly hydrolyze UDP-glucose. This chain is Lipopolysaccharide glucosyltransferase WaaG, found in Escherichia coli (strain K12).